The primary structure comprises 239 residues: Ribose-5-phosphate isomerase A (239 aa).

Substrate contacts are provided by residues 34–37, 94–97, and 107–110; these read TGST, DGAD, and KGGG. E116 serves as the catalytic Proton acceptor. A substrate-binding site is contributed by K134.

Belongs to the ribose 5-phosphate isomerase family. In terms of assembly, homodimer.

It carries out the reaction aldehydo-D-ribose 5-phosphate = D-ribulose 5-phosphate. Its pathway is carbohydrate degradation; pentose phosphate pathway; D-ribose 5-phosphate from D-ribulose 5-phosphate (non-oxidative stage): step 1/1. In terms of biological role, catalyzes the reversible conversion of ribose-5-phosphate to ribulose 5-phosphate. This is Ribose-5-phosphate isomerase A from Treponema denticola (strain ATCC 35405 / DSM 14222 / CIP 103919 / JCM 8153 / KCTC 15104).